The primary structure comprises 643 residues: Sodium/iodide cotransporter (643 aa).

Residues 1-14 (MEAVETGERPTFGA) are Extracellular-facing. The chain crosses the membrane as a helical span at residues 15-31 (WDYGVFALMLLVSTGIG). At 32–56 (LWVGLARGGQRSAEDFFTGGRRLAA) the chain is on the cytoplasmic side. Residues 57 to 80 (LPVGLSLSASFMSAVQVLGVPSEA) form a discontinuously helical membrane-spanning segment. S69, V71, and Q72 together coordinate Na(+). V76 is a binding site for iodide. The Extracellular portion of the chain corresponds to 81–84 (YRYG). A helical transmembrane segment spans residues 85 to 105 (LKFLWMCLGQLLNSVLTALLF). Residue M90 coordinates iodide. Over 106-130 (MPVFYRLGLTSTYEYLEMRFSRAVR) the chain is Cytoplasmic. A helical transmembrane segment spans residues 131–157 (LCGTLQYIVATMLYTGIVIYAPALILN). A Na(+)-binding site is contributed by Y144. Topologically, residues 158 to 163 (QVTGLD) are extracellular. The helical transmembrane segment at 164 to 181 (IWASLLSTGIICTFYTAV) threads the bilayer. Topologically, residues 182-189 (GGMKAVVW) are cytoplasmic. The helical transmembrane segment at 190 to 208 (TDVFQVVVMLSGFWVVLAR) threads the bilayer. The Extracellular segment spans residues 209-243 (GVMLVGGPRQVLTLAQNHSRINLMDFNPDPRSRYT). Residues 244-266 (FWTFVVGGTLVWLSMYGVNQAQV) traverse the membrane as a discontinuously helical segment. Residue W255 participates in iodide binding. M258 contacts Na(+). Residues 267 to 278 (QRYVACRTEKQA) lie on the Cytoplasmic side of the membrane. A helical transmembrane segment spans residues 279-301 (KLALLINQVGLFLIVSSAACCGI). Residues 302-335 (VMFVFYTDCDPLLLGRISAPDQYMPLLVLDIFED) lie on the Extracellular side of the membrane. The chain crosses the membrane as a helical span at residues 336–363 (LPGVPGLFLACAYSGTLSTASTSINAMA). Over 364 to 386 (AVTVEDLIKPRLRSLAPRKLVII) the chain is Cytoplasmic. Residues 387–408 (SKGLSLIYGSACLTVAALSSLL) form a helical membrane-spanning segment. Residues 409–411 (GGG) are Extracellular-facing. The helical transmembrane segment at 412–437 (VLQGSFTVMGVISGPLLGAFILGMFL) threads the bilayer. L413 contacts iodide. Na(+) contacts are provided by S416 and F417. Iodide is bound at residue F417. At 438–441 (PACN) the chain is on the cytoplasmic side. The helical transmembrane segment at 442 to 465 (TPGVLAGLGAGLALSLWVALGATL) threads the bilayer. The Extracellular segment spans residues 466–525 (YPPSEQTMRVLPSSAARCVALSVNASGLLDPALLPANDSSRAPSSGMDASRPALADSFYA). N-linked (GlcNAc...) asparagine glycosylation is found at N489 and N502. A helical membrane pass occupies residues 526-550 (ISYLYYGALGTLTTVLCGALISCLT). Topologically, residues 551-643 (GPTKRSTLAP…GGRDQQETNL (93 aa)) are cytoplasmic. S556 bears the Phosphoserine; by PKA mark. A disordered region spans residues 623–643 (AGSWTPCVGHDGGRDQQETNL). Residues 633–643 (DGGRDQQETNL) show a composition bias toward basic and acidic residues.

This sequence belongs to the sodium:solute symporter (SSF) (TC 2.A.21) family. Monomer. Glycosylated. In terms of tissue distribution, expression is primarily in thyroid tissue, but also to a lower extent in mammary gland and ovary. Expression is reduced in tumors.

It localises to the cell membrane. The protein resides in the cytoplasm. The catalysed reaction is iodide(out) + 2 Na(+)(out) = iodide(in) + 2 Na(+)(in). It catalyses the reaction chlorate(out) + 2 Na(+)(out) = chlorate(in) + 2 Na(+)(in). The enzyme catalyses thiocyanate(out) + 2 Na(+)(out) = thiocyanate(in) + 2 Na(+)(in). It carries out the reaction nitrate(out) + 2 Na(+)(out) = nitrate(in) + 2 Na(+)(in). The catalysed reaction is selenocyanate(out) + 2 Na(+)(out) = selenocyanate(in) + 2 Na(+)(in). With respect to regulation, dysidenin and perchlorate inhibit iodide transport activity. Oxyanions inhibit iodide transport activity by blocking the binding sites for iodide and one of the sodium ions. Its function is as follows. Sodium:iodide symporter that mediates the transport of iodide into the thyroid gland. Can also mediate the transport of chlorate, thiocynate, nitrate and selenocynate. This is Sodium/iodide cotransporter (SLC5A5) from Homo sapiens (Human).